A 205-amino-acid polypeptide reads, in one-letter code: Thiamine-phosphate synthase (205 aa).

Residues 35-39 (QYRDK) and Asn-67 each bind 4-amino-2-methyl-5-(diphosphooxymethyl)pyrimidine. Mg(2+) contacts are provided by Asp-68 and Asp-86. Position 105 (Thr-105) interacts with 4-amino-2-methyl-5-(diphosphooxymethyl)pyrimidine. 132–134 (SQT) lines the 2-[(2R,5Z)-2-carboxy-4-methylthiazol-5(2H)-ylidene]ethyl phosphate pocket. Lys-135 serves as a coordination point for 4-amino-2-methyl-5-(diphosphooxymethyl)pyrimidine. Position 162 (Gly-162) interacts with 2-[(2R,5Z)-2-carboxy-4-methylthiazol-5(2H)-ylidene]ethyl phosphate.

Belongs to the thiamine-phosphate synthase family. The cofactor is Mg(2+).

The catalysed reaction is 2-[(2R,5Z)-2-carboxy-4-methylthiazol-5(2H)-ylidene]ethyl phosphate + 4-amino-2-methyl-5-(diphosphooxymethyl)pyrimidine + 2 H(+) = thiamine phosphate + CO2 + diphosphate. It catalyses the reaction 2-(2-carboxy-4-methylthiazol-5-yl)ethyl phosphate + 4-amino-2-methyl-5-(diphosphooxymethyl)pyrimidine + 2 H(+) = thiamine phosphate + CO2 + diphosphate. The enzyme catalyses 4-methyl-5-(2-phosphooxyethyl)-thiazole + 4-amino-2-methyl-5-(diphosphooxymethyl)pyrimidine + H(+) = thiamine phosphate + diphosphate. Its pathway is cofactor biosynthesis; thiamine diphosphate biosynthesis; thiamine phosphate from 4-amino-2-methyl-5-diphosphomethylpyrimidine and 4-methyl-5-(2-phosphoethyl)-thiazole: step 1/1. Condenses 4-methyl-5-(beta-hydroxyethyl)thiazole monophosphate (THZ-P) and 2-methyl-4-amino-5-hydroxymethyl pyrimidine pyrophosphate (HMP-PP) to form thiamine monophosphate (TMP). The sequence is that of Thiamine-phosphate synthase from Pseudomonas syringae pv. tomato (strain ATCC BAA-871 / DC3000).